Reading from the N-terminus, the 707-residue chain is Lipase maturation factor 2 (707 aa).

Helical transmembrane passes span 10-30, 78-98, 102-122, 123-143, 165-185, 227-247, 259-279, 310-330, 364-384, and 399-419; these read LFLQ…YTQI, LELL…LSPL, VIYL…QVFL, YFQW…VAPL, DLPF…SGVV, LSVV…FAPI, VLLQ…LMTL, ALLA…LAYG, LTLP…LSAL, and AVVQ…ISLV. N-linked (GlcNAc...) asparagine glycosylation is found at N489 and N616. The chain crosses the membrane as a helical span at residues 637-657; that stretch reads ALLWGLLMAVGAVRFVQALLA. Residues 665-707 form a disordered region; it reads PLAPVSGEKRRPASQKDSGAASEQATAAPNPCSSSSRTTRRKK. Residues 679–691 are compositionally biased toward polar residues; that stretch reads QKDSGAASEQATA.

It belongs to the lipase maturation factor family.

The protein resides in the endoplasmic reticulum membrane. Involved in the maturation of specific proteins in the endoplasmic reticulum. May be required for maturation and transport of active lipoprotein lipase (LPL) through the secretory pathway. This chain is Lipase maturation factor 2 (LMF2), found in Homo sapiens (Human).